The chain runs to 238 residues: 7-cyano-7-deazaguanine synthase 1 (238 aa).

Residue 14–24 coordinates ATP; sequence FSGGQDSATCL. Zn(2+) contacts are provided by cysteine 202, cysteine 217, cysteine 220, and cysteine 223.

The protein belongs to the QueC family. Zn(2+) serves as cofactor.

It carries out the reaction 7-carboxy-7-deazaguanine + NH4(+) + ATP = 7-cyano-7-deazaguanine + ADP + phosphate + H2O + H(+). Its pathway is purine metabolism; 7-cyano-7-deazaguanine biosynthesis. Catalyzes the ATP-dependent conversion of 7-carboxy-7-deazaguanine (CDG) to 7-cyano-7-deazaguanine (preQ(0)). This Rhodopseudomonas palustris (strain HaA2) protein is 7-cyano-7-deazaguanine synthase 1.